The sequence spans 625 residues: TORTIFOLIA1-like protein 4 (625 aa).

Residues Met1 to Asp34 form a disordered region. A compositionally biased stretch (low complexity) spans Pro12–Pro29. HEAT repeat units lie at residues Asp69 to Asp106, Pro110 to Arg147, Pro149 to Asp186, Glu190 to Ala227, and Lys230 to Leu268. The disordered stretch occupies residues Ser391 to Glu466. Composition is skewed to basic and acidic residues over residues Lys404–Ala413, Ile420–Lys434, and Asp455–Glu466. The residue at position 475 (Ser475) is a Phosphoserine. A disordered region spans residues Gly582 to Thr625. Residues Met612–Thr625 are compositionally biased toward polar residues.

The chain is TORTIFOLIA1-like protein 4 from Arabidopsis thaliana (Mouse-ear cress).